A 934-amino-acid polypeptide reads, in one-letter code: Bifunctional uridylyltransferase/uridylyl-removing enzyme (934 aa).

The interval 1-379 is uridylyltransferase; it reads MSAHDLKLEE…TFSRRKRKLS (379 aa). A uridylyl-removing region spans residues 380–736; it reads DDGAFISENH…AKPHAFEAVT (357 aa). Positions 496–613 constitute an HD domain; the sequence is VDEHLLRCIA…IDFADTVQTM (118 aa). 2 consecutive ACT domains span residues 737-818 and 848-931; these read EITV…DMLA and VIEV…RSPQ.

The protein belongs to the GlnD family. Mg(2+) serves as cofactor.

It catalyses the reaction [protein-PII]-L-tyrosine + UTP = [protein-PII]-uridylyl-L-tyrosine + diphosphate. The catalysed reaction is [protein-PII]-uridylyl-L-tyrosine + H2O = [protein-PII]-L-tyrosine + UMP + H(+). Its activity is regulated as follows. Uridylyltransferase (UTase) activity is inhibited by glutamine, while glutamine activates uridylyl-removing (UR) activity. Its function is as follows. Modifies, by uridylylation and deuridylylation, the PII regulatory proteins (GlnB and homologs), in response to the nitrogen status of the cell that GlnD senses through the glutamine level. Under low glutamine levels, catalyzes the conversion of the PII proteins and UTP to PII-UMP and PPi, while under higher glutamine levels, GlnD hydrolyzes PII-UMP to PII and UMP (deuridylylation). Thus, controls uridylylation state and activity of the PII proteins, and plays an important role in the regulation of nitrogen assimilation and metabolism. The protein is Bifunctional uridylyltransferase/uridylyl-removing enzyme of Brucella suis (strain ATCC 23445 / NCTC 10510).